A 173-amino-acid polypeptide reads, in one-letter code: Mesencephalic astrocyte-derived neurotrophic factor homolog (173 aa).

Residues 1–22 (MNTSHIVLMICFIVGVGQTALA) form the signal peptide. 4 cysteine pairs are disulfide-bonded: Cys28/Cys114, Cys31/Cys103, Cys61/Cys72, and Cys148/Cys151.

Belongs to the ARMET family.

Its subcellular location is the secreted. Functionally, required during the maturation of the embryonic nervous system for maintenance of neuronal and cuticular connectivity. Essential for maintenance of dopaminergic neurons and dopamine levels. The protein is Mesencephalic astrocyte-derived neurotrophic factor homolog of Drosophila virilis (Fruit fly).